Consider the following 452-residue polypeptide: MTARNSLTIVLAAGEGTRMRSSLPKVLNPVAGRSLLAHVLSAAPHGERDRLAVVIGPDHQAVGDEAKRVRSDAAIHIQAQRLGTAHAVLAAREAIAQGADDLLIAFGDTPLISAETFARLREPLHDGSSLVVLGFRAADPTGYGRLVVQDGKLTAIREQADASADELKITLCNAGVMAIDGKIALDVLDKIGNANAKGEYYLTDAVGIVRDLGLTASVIETSEDEVRGINTKAQLAEAETVMQTRLRLAAMAAGVTLIAPETVYLAADTTFGKDVVIEPFVVIGPGVSIADGAVIHSFSHLTEAKIGSKAQVGPYARLRPGTSLGDGAKIGNFVETKAAQIDAGAKVNHLTYIGDAHIGASANIGAGTITCNYDGFDKHKTEIGAGAFIGSNSSLVAPVKIGTGAYVGSGSVITKDVPDGALAVERNVQTAKDGWAKRFRDAKSRHRKPKAH.

The tract at residues 1–232 is pyrophosphorylase; sequence MTARNSLTIV…EDEVRGINTK (232 aa). UDP-N-acetyl-alpha-D-glucosamine contacts are provided by residues 11–14, Lys-25, Gln-78, and 83–84; these read LAAG and GT. A Mg(2+)-binding site is contributed by Asp-108. Residues Gly-144, Glu-158, Asn-173, and Asn-230 each contribute to the UDP-N-acetyl-alpha-D-glucosamine site. A Mg(2+)-binding site is contributed by Asn-230. Residues 233–253 are linker; the sequence is AQLAEAETVMQTRLRLAAMAA. The segment at 254 to 452 is N-acetyltransferase; the sequence is GVTLIAPETV…KSRHRKPKAH (199 aa). The UDP-N-acetyl-alpha-D-glucosamine site is built by Arg-319 and Lys-337. His-349 serves as the catalytic Proton acceptor. UDP-N-acetyl-alpha-D-glucosamine-binding residues include Tyr-352 and Asn-363. Acetyl-CoA is bound by residues Ala-366, 372–373, Ser-391, Ser-409, and Arg-426; that span reads NY.

It in the N-terminal section; belongs to the N-acetylglucosamine-1-phosphate uridyltransferase family. This sequence in the C-terminal section; belongs to the transferase hexapeptide repeat family. As to quaternary structure, homotrimer. Requires Mg(2+) as cofactor.

The protein resides in the cytoplasm. It catalyses the reaction alpha-D-glucosamine 1-phosphate + acetyl-CoA = N-acetyl-alpha-D-glucosamine 1-phosphate + CoA + H(+). The enzyme catalyses N-acetyl-alpha-D-glucosamine 1-phosphate + UTP + H(+) = UDP-N-acetyl-alpha-D-glucosamine + diphosphate. It functions in the pathway nucleotide-sugar biosynthesis; UDP-N-acetyl-alpha-D-glucosamine biosynthesis; N-acetyl-alpha-D-glucosamine 1-phosphate from alpha-D-glucosamine 6-phosphate (route II): step 2/2. Its pathway is nucleotide-sugar biosynthesis; UDP-N-acetyl-alpha-D-glucosamine biosynthesis; UDP-N-acetyl-alpha-D-glucosamine from N-acetyl-alpha-D-glucosamine 1-phosphate: step 1/1. The protein operates within bacterial outer membrane biogenesis; LPS lipid A biosynthesis. Functionally, catalyzes the last two sequential reactions in the de novo biosynthetic pathway for UDP-N-acetylglucosamine (UDP-GlcNAc). The C-terminal domain catalyzes the transfer of acetyl group from acetyl coenzyme A to glucosamine-1-phosphate (GlcN-1-P) to produce N-acetylglucosamine-1-phosphate (GlcNAc-1-P), which is converted into UDP-GlcNAc by the transfer of uridine 5-monophosphate (from uridine 5-triphosphate), a reaction catalyzed by the N-terminal domain. The polypeptide is Bifunctional protein GlmU (Rhodopseudomonas palustris (strain ATCC BAA-98 / CGA009)).